Here is a 294-residue protein sequence, read N- to C-terminus: ATP synthase gamma chain (294 aa).

The protein belongs to the ATPase gamma chain family. F-type ATPases have 2 components, CF(1) - the catalytic core - and CF(0) - the membrane proton channel. CF(1) has five subunits: alpha(3), beta(3), gamma(1), delta(1), epsilon(1). CF(0) has three main subunits: a, b and c.

It is found in the cell inner membrane. Functionally, produces ATP from ADP in the presence of a proton gradient across the membrane. The gamma chain is believed to be important in regulating ATPase activity and the flow of protons through the CF(0) complex. The sequence is that of ATP synthase gamma chain from Campylobacter lari (strain RM2100 / D67 / ATCC BAA-1060).